The following is a 379-amino-acid chain: Dual-specificity RNA methyltransferase RlmN (379 aa).

Glu-97 (proton acceptor) is an active-site residue. The Radical SAM core domain occupies 103–343; that stretch reads QGGRGTLCVS…VRTTRGDDID (241 aa). Cys-110 and Cys-346 are oxidised to a cystine. [4Fe-4S] cluster contacts are provided by Cys-117, Cys-121, and Cys-124. S-adenosyl-L-methionine contacts are provided by residues 171–172, Ser-203, 225–227, and Asn-303; these read GE and SLH. Catalysis depends on Cys-346, which acts as the S-methylcysteine intermediate.

Belongs to the radical SAM superfamily. RlmN family. [4Fe-4S] cluster serves as cofactor.

It localises to the cytoplasm. The enzyme catalyses adenosine(2503) in 23S rRNA + 2 reduced [2Fe-2S]-[ferredoxin] + 2 S-adenosyl-L-methionine = 2-methyladenosine(2503) in 23S rRNA + 5'-deoxyadenosine + L-methionine + 2 oxidized [2Fe-2S]-[ferredoxin] + S-adenosyl-L-homocysteine. It catalyses the reaction adenosine(37) in tRNA + 2 reduced [2Fe-2S]-[ferredoxin] + 2 S-adenosyl-L-methionine = 2-methyladenosine(37) in tRNA + 5'-deoxyadenosine + L-methionine + 2 oxidized [2Fe-2S]-[ferredoxin] + S-adenosyl-L-homocysteine. Functionally, specifically methylates position 2 of adenine 2503 in 23S rRNA and position 2 of adenine 37 in tRNAs. m2A2503 modification seems to play a crucial role in the proofreading step occurring at the peptidyl transferase center and thus would serve to optimize ribosomal fidelity. In Pseudomonas aeruginosa (strain ATCC 15692 / DSM 22644 / CIP 104116 / JCM 14847 / LMG 12228 / 1C / PRS 101 / PAO1), this protein is Dual-specificity RNA methyltransferase RlmN.